We begin with the raw amino-acid sequence, 485 residues long: Adenylate kinase 8 (485 aa).

2 adenylate kinase regions span residues Pro58–Leu258 and Pro269–Ser472. Ala67–Thr72 lines the ATP pocket. Residues Thr87 to Val113 form an NMP 1 region. Residues Gly140–Lys143 and Gln147 contribute to the AMP site. The interval Gly177–Glu206 is LID 1. Arg218 lines the AMP pocket. Gly278–Leu283 lines the ATP pocket. The interval Cys298–Val327 is NMP 2. AMP is bound by residues Gln325–Val327, Gly354–Arg357, and Gln361. Residues Leu391–His424 form an LID 2 region. Arg432 provides a ligand contact to AMP.

Belongs to the adenylate kinase family.

It localises to the cytoplasm. The protein resides in the cytosol. The enzyme catalyses AMP + ATP = 2 ADP. It catalyses the reaction a 2'-deoxyribonucleoside 5'-diphosphate + ATP = a 2'-deoxyribonucleoside 5'-triphosphate + ADP. The catalysed reaction is a ribonucleoside 5'-diphosphate + ATP = a ribonucleoside 5'-triphosphate + ADP. Nucleoside monophosphate (NMP) kinase that catalyzes the reversible transfer of the terminal phosphate group between nucleoside triphosphates and monophosphates. Has highest activity toward AMP, and weaker activity toward dAMP, CMP and dCMP. Also displays broad nucleoside diphosphate kinase activity. The polypeptide is Adenylate kinase 8 (ak8) (Xenopus tropicalis (Western clawed frog)).